The primary structure comprises 378 residues: Queuine tRNA-ribosyltransferase (378 aa).

The Proton acceptor role is filled by aspartate 89. Residues 89–93 (DSGGF), aspartate 143, glutamine 187, and glycine 214 contribute to the substrate site. An RNA binding region spans residues 245 to 251 (GVGKPQD). The Nucleophile role is filled by aspartate 264. The RNA binding; important for wobble base 34 recognition stretch occupies residues 269–273 (TRNAR). Zn(2+) contacts are provided by cysteine 302, cysteine 304, cysteine 307, and histidine 334.

It belongs to the queuine tRNA-ribosyltransferase family. Homodimer. Within each dimer, one monomer is responsible for RNA recognition and catalysis, while the other monomer binds to the replacement base PreQ1. Requires Zn(2+) as cofactor.

It carries out the reaction 7-aminomethyl-7-carbaguanine + guanosine(34) in tRNA = 7-aminomethyl-7-carbaguanosine(34) in tRNA + guanine. The protein operates within tRNA modification; tRNA-queuosine biosynthesis. In terms of biological role, catalyzes the base-exchange of a guanine (G) residue with the queuine precursor 7-aminomethyl-7-deazaguanine (PreQ1) at position 34 (anticodon wobble position) in tRNAs with GU(N) anticodons (tRNA-Asp, -Asn, -His and -Tyr). Catalysis occurs through a double-displacement mechanism. The nucleophile active site attacks the C1' of nucleotide 34 to detach the guanine base from the RNA, forming a covalent enzyme-RNA intermediate. The proton acceptor active site deprotonates the incoming PreQ1, allowing a nucleophilic attack on the C1' of the ribose to form the product. After dissociation, two additional enzymatic reactions on the tRNA convert PreQ1 to queuine (Q), resulting in the hypermodified nucleoside queuosine (7-(((4,5-cis-dihydroxy-2-cyclopenten-1-yl)amino)methyl)-7-deazaguanosine). This Blochmanniella floridana protein is Queuine tRNA-ribosyltransferase.